We begin with the raw amino-acid sequence, 432 residues long: Glutamate-1-semialdehyde 2,1-aminomutase (432 aa).

An N6-(pyridoxal phosphate)lysine modification is found at Lys272.

Belongs to the class-III pyridoxal-phosphate-dependent aminotransferase family. HemL subfamily. In terms of assembly, homodimer. It depends on pyridoxal 5'-phosphate as a cofactor.

The protein resides in the cytoplasm. It carries out the reaction (S)-4-amino-5-oxopentanoate = 5-aminolevulinate. It participates in porphyrin-containing compound metabolism; protoporphyrin-IX biosynthesis; 5-aminolevulinate from L-glutamyl-tRNA(Glu): step 2/2. It functions in the pathway porphyrin-containing compound metabolism; chlorophyll biosynthesis. The protein is Glutamate-1-semialdehyde 2,1-aminomutase of Nostoc sp. (strain PCC 7120 / SAG 25.82 / UTEX 2576).